A 291-amino-acid chain; its full sequence is Small ribosomal subunit protein uS2 (291 aa).

Positions S256 to W291 are disordered.

Belongs to the universal ribosomal protein uS2 family. In terms of assembly, component of the small ribosomal subunit. Mature ribosomes consist of a small (40S) and a large (60S) subunit. The 40S subunit contains about 33 different proteins and 1 molecule of RNA (18S). The 60S subunit contains about 49 different proteins and 3 molecules of RNA (25S, 5.8S and 5S). Interacts with RPS21.

Its subcellular location is the cytoplasm. Functionally, required for the assembly and/or stability of the 40S ribosomal subunit. Required for the processing of the 20S rRNA-precursor to mature 18S rRNA in a late step of the maturation of 40S ribosomal subunits. The protein is Small ribosomal subunit protein uS2 of Coccidioides immitis (strain RS) (Valley fever fungus).